Here is a 641-residue protein sequence, read N- to C-terminus: MSEFSKTPLLDTIRTPADLRKLRIDQVRQVADELRQETIEAVSVTGGHFGAGLGVVELTTAIHYVFDTPRDRLIWDVGHQAYPHKILTGRRDRIRTLRTGGGLSGFTKRTESDYDPFGAAHSSTSISAGLGMAVARDLAGGKNNVIAVIGDGSISAGMAYEAMNNAGAMNSRLIVILNDNNMSIAPPVGAMSAYLSRLYSGKTYRTLREAGKQIGKHLPKLIADRAARAEEYSRGFMMGGGTLFEELGFYYVGPVDGHNLDHLLPILQNVRDADTGPFLIHVVTQKGKGYGPAEAASDKYHAVVKFDIATGAQAKAKSNAPSYQNVFGQSLVKEAQKDDKIVGITAAMPSGTGIDIFEKAFPTRTFDVGIAEQHAVTFAAGLAAEGYKPFCAIYSTFLQRGYDQVVHDVAIQSLPVRFAIDRAGLVGADGATHAGSFDNAFLGCLPNMVIMAASDEAELVHMVATQVAINDRPSAVRYPRGEGRGVEMPEVGIALEIGKGRIVREGNKIALLSFGTRLAECEKAADELATLGLSTTIADARFMKPLDVELVLKLARDHEILLTIEEGSIGGFGSHVMQTLAEHGMLDGEVRMRSLVLPDEFMDHDTPTAMYARAGLDAKGIVKKVFEALGKDAKTDTVKLA.

Residues His-79 and 120 to 122 (AHS) contribute to the thiamine diphosphate site. Mg(2+) is bound at residue Asp-151. Thiamine diphosphate-binding positions include 152–153 (GS), Asn-180, Tyr-290, and Glu-372. Asn-180 is a binding site for Mg(2+).

Belongs to the transketolase family. DXPS subfamily. Homodimer. It depends on Mg(2+) as a cofactor. Thiamine diphosphate serves as cofactor.

The enzyme catalyses D-glyceraldehyde 3-phosphate + pyruvate + H(+) = 1-deoxy-D-xylulose 5-phosphate + CO2. The protein operates within metabolic intermediate biosynthesis; 1-deoxy-D-xylulose 5-phosphate biosynthesis; 1-deoxy-D-xylulose 5-phosphate from D-glyceraldehyde 3-phosphate and pyruvate: step 1/1. In terms of biological role, catalyzes the acyloin condensation reaction between C atoms 2 and 3 of pyruvate and glyceraldehyde 3-phosphate to yield 1-deoxy-D-xylulose-5-phosphate (DXP). The protein is 1-deoxy-D-xylulose-5-phosphate synthase of Rhodopseudomonas palustris (strain BisB18).